We begin with the raw amino-acid sequence, 161 residues long: Ribonuclease H (161 aa).

Positions 3–144 (GLKQISIYTD…CDDLARQAAE (142 aa)) constitute an RNase H type-1 domain. The Mg(2+) site is built by aspartate 12, glutamate 50, aspartate 72, and aspartate 136. The interval 133–161 (ERCDDLARQAAEAKPSQEDSGYINQQAQA) is disordered. Polar residues predominate over residues 150 to 161 (EDSGYINQQAQA).

This sequence belongs to the RNase H family. As to quaternary structure, monomer. Requires Mg(2+) as cofactor.

It is found in the cytoplasm. The catalysed reaction is Endonucleolytic cleavage to 5'-phosphomonoester.. Its function is as follows. Endonuclease that specifically degrades the RNA of RNA-DNA hybrids. This is Ribonuclease H from Shewanella halifaxensis (strain HAW-EB4).